Consider the following 94-residue polypeptide: Small ribosomal subunit protein uS19c (94 aa).

This sequence belongs to the universal ribosomal protein uS19 family.

Its subcellular location is the plastid. The protein localises to the chloroplast. Functionally, protein S19 forms a complex with S13 that binds strongly to the 16S ribosomal RNA. This chain is Small ribosomal subunit protein uS19c, found in Pleurastrum terricola (Filamentous green alga).